Reading from the N-terminus, the 391-residue chain is 23S rRNA (uracil(747)-C(5))-methyltransferase RlmC (391 aa).

Positions 5, 13, 16, and 95 each coordinate [4Fe-4S] cluster. S-adenosyl-L-methionine is bound by residues Q220, F249, E276, and N322. C349 functions as the Nucleophile in the catalytic mechanism.

Belongs to the class I-like SAM-binding methyltransferase superfamily. RNA M5U methyltransferase family. RlmC subfamily.

The enzyme catalyses uridine(747) in 23S rRNA + S-adenosyl-L-methionine = 5-methyluridine(747) in 23S rRNA + S-adenosyl-L-homocysteine + H(+). Functionally, catalyzes the formation of 5-methyl-uridine at position 747 (m5U747) in 23S rRNA. In Actinobacillus pleuropneumoniae serotype 3 (strain JL03), this protein is 23S rRNA (uracil(747)-C(5))-methyltransferase RlmC.